The following is a 229-amino-acid chain: Potassium/proton antiporter CemA (229 aa).

Helical transmembrane passes span 7–27, 114–134, 154–174, and 189–209; these read FTPL…SFSF, IISF…LVVL, ILLL…ELMI, and IISG…KYWI.

The protein belongs to the CemA family.

It is found in the plastid. It localises to the chloroplast inner membrane. The catalysed reaction is K(+)(in) + H(+)(out) = K(+)(out) + H(+)(in). Functionally, contributes to K(+)/H(+) antiport activity by supporting proton efflux to control proton extrusion and homeostasis in chloroplasts in a light-dependent manner to modulate photosynthesis. Prevents excessive induction of non-photochemical quenching (NPQ) under continuous-light conditions. Indirectly promotes efficient inorganic carbon uptake into chloroplasts. This Nandina domestica (Heavenly bamboo) protein is Potassium/proton antiporter CemA.